Reading from the N-terminus, the 478-residue chain is Putative multidrug resistance outer membrane protein MdtQ (478 aa).

Positions 1–21 (MNRDSFYPAIACFPLLLMLAG) are cleaved as a signal peptide. Cys22 carries N-palmitoyl cysteine lipidation. Cys22 carries S-diacylglycerol cysteine lipidation.

It belongs to the outer membrane factor (OMF) (TC 1.B.17) family.

The protein resides in the cell outer membrane. Could be involved in resistance to puromycin, acriflavine and tetraphenylarsonium chloride. The chain is Putative multidrug resistance outer membrane protein MdtQ (mdtQ) from Shigella flexneri.